The chain runs to 651 residues: Probable potassium transport system protein Kup (651 aa).

12 consecutive transmembrane segments (helical) span residues Leu-41–Phe-61, Val-82–Val-102, Leu-130–Pro-150, Ile-163–Leu-183, Val-194–Leu-214, Phe-235–Thr-255, Trp-276–Leu-296, Met-309–Ala-329, Ile-366–Phe-386, Ala-395–Met-415, Ala-426–Ile-446, and Glu-450–Val-470.

The protein belongs to the HAK/KUP transporter (TC 2.A.72) family.

It localises to the cell inner membrane. It carries out the reaction K(+)(in) + H(+)(in) = K(+)(out) + H(+)(out). Functionally, transport of potassium into the cell. Likely operates as a K(+):H(+) symporter. The protein is Probable potassium transport system protein Kup of Brucella melitensis biotype 1 (strain ATCC 23456 / CCUG 17765 / NCTC 10094 / 16M).